Here is a 79-residue protein sequence, read N- to C-terminus: Translational regulator CsrA (79 aa).

This sequence belongs to the CsrA/RsmA family. In terms of assembly, homodimer; the beta-strands of each monomer intercalate to form a hydrophobic core, while the alpha-helices form wings that extend away from the core.

Its subcellular location is the cytoplasm. Functionally, a translational regulator that binds mRNA to regulate translation initiation and/or mRNA stability. Usually binds in the 5'-UTR at or near the Shine-Dalgarno sequence preventing ribosome-binding, thus repressing translation. Its main target seems to be the major flagellin gene, while its function is anatagonized by FliW. In Leptospira biflexa serovar Patoc (strain Patoc 1 / Ames), this protein is Translational regulator CsrA.